A 176-amino-acid chain; its full sequence is ATP-dependent protease subunit HslV (176 aa).

T2 is a catalytic residue. Na(+)-binding residues include G157, C160, and T163.

Belongs to the peptidase T1B family. HslV subfamily. A double ring-shaped homohexamer of HslV is capped on each side by a ring-shaped HslU homohexamer. The assembly of the HslU/HslV complex is dependent on binding of ATP.

The protein resides in the cytoplasm. The catalysed reaction is ATP-dependent cleavage of peptide bonds with broad specificity.. With respect to regulation, allosterically activated by HslU binding. In terms of biological role, protease subunit of a proteasome-like degradation complex believed to be a general protein degrading machinery. The sequence is that of ATP-dependent protease subunit HslV from Pseudomonas entomophila (strain L48).